The chain runs to 2809 residues: Fibrillin-3 (2809 aa).

The first 31 residues, 1-31 (MTLEGLYLARGPLARLLLAWSALLCMAGGQG), serve as a signal peptide directing secretion. Residues 32 to 48 (RWDGALEAAGPGRVRRR) constitute a propeptide that is removed on maturation. Residues 147–179 (GQPICDRGCHNGGRCIGPNRCACVYGFMGPQCE) enclose the EGF-like 1 domain. Disulfide bonds link C151-C161, C155-C167, and C169-C178. The region spanning 185 to 237 (GPCFGQVGPEGCQHQLTGLVCTKALCCATVGRAWGLPCELCPAQPHPCRRGFI) is the TB 1 domain. In terms of domain architecture, EGF-like 2; calcium-binding spans 247 to 288 (DVDECQAVPGLCQGGSCVNMVGSFHCRCPVGHRLSDSSAACE). 3 cysteine pairs are disulfide-bonded: C251–C263, C258–C272, and C274–C287. One can recognise a TB 2 domain in the interval 293 to 346 (GACFSVLFGGRCAGDLAGHYTRRQCCCDRGRCWAAGPVPELCPPRGSNEFQQLC). An N-linked (GlcNAc...) asparagine glycan is attached at N406. In terms of domain architecture, EGF-like 3 spans 408-448 (TIDICRHFTNLCLNGRCLPTPSSYRCECNVGYTQDVRGECI). Intrachain disulfides connect C412–C424, C419–C433, C435–C447, C453–C463, C458–C472, C474–C487, C493–C505, C500–C514, C516–C529, C535–C546, C541–C555, C557–C570, C576–C587, C582–C596, and C598–C611. The EGF-like 4; calcium-binding domain maps to 449 to 488 (DVDECTSSPCHHGDCVNIPGTYHCRCYPGFQATPTRQACV). An EGF-like 5; calcium-binding domain is found at 489–530 (DVDECIVSGGLCHLGRCVNTEGSFQCVCNAGFELSPDGKNCV). Residues 531–571 (DHNECATSTMCVNGVCLNEDGSFSCLCKPGFLLAPGGHYCM) enclose the EGF-like 6; calcium-binding domain. In terms of domain architecture, EGF-like 7; calcium-binding spans 572 to 612 (DIDECQTPGICVNGHCTNTEGSFRCQCLGGLAVGTDGRVCV). A TB 3 domain is found at 618-670 (STCYGAIEKGSCARPFPGTVTKSECCCANPDHGFGEPCQLCPAKDSAEFQALC). In terms of domain architecture, EGF-like 8; calcium-binding spans 682 to 723 (DINECALDPEVCANGVCENLRGSYRCVCNLGYEAGASGKDCT). Intrachain disulfides connect C686–C698, C693–C707, C709–C722, C728–C740, C735–C749, C751–C764, C770–C780, C775–C789, and C791–C804. An EGF-like 9; calcium-binding domain is found at 724–765 (DVDECALNSLLCDNGWCQNSPGSYSCSCPPGFHFWQDTEICK). Positions 766–805 (DVDECLSSPCVSGVCRNLAGSYTCKCGPGSRLDPSGTFCL) constitute an EGF-like 10; calcium-binding domain. Residues 810 to 861 (GTCWLKIQESRCEVNLQGASLRSECCATLGAAWGSPCERCEIDPACARGFAR) enclose the TB 4 domain. The EGF-like 11; calcium-binding domain occupies 869 to 910 (DVNECESFPGVCPNGRCVNTAGSFRCECPEGLMLDASGRLCV). 3 disulfide bridges follow: C873-C885, C880-C894, and C896-C909. In terms of domain architecture, TB 5 spans 915–966 (EPCFLRWDEDECGVTLPGKYRMDVCCCSIGAVWGVECEACPDPESLEFASLC). Positions 986–1027 (DVNECKVFPGLCTHGTCRNTVGSFHCACAGGFALDAQERNCT) constitute an EGF-like 12; calcium-binding domain. 36 disulfide bridges follow: C990-C1002, C997-C1011, C1013-C1026, C1032-C1044, C1039-C1053, C1055-C1069, C1075-C1087, C1082-C1096, C1098-C1111, C1117-C1129, C1124-C1138, C1140-C1153, C1159-C1170, C1166-C1179, C1181-C1194, C1200-C1212, C1207-C1221, C1223-C1236, C1242-C1254, C1249-C1263, C1265-C1278, C1284-C1297, C1291-C1306, C1308-C1319, C1325-C1338, C1332-C1347, C1349-C1360, C1366-C1378, C1373-C1387, C1389-C1402, C1408-C1419, C1414-C1428, C1430-C1443, C1449-C1460, C1455-C1469, and C1471-C1484. A glycan (N-linked (GlcNAc...) asparagine) is linked at N1025. The region spanning 1028–1070 (DIDECRISPDLCGQGTCVNTPGSFECECFPGYESGFMLMKNCM) is the EGF-like 13; calcium-binding domain. One can recognise an EGF-like 14; calcium-binding domain in the interval 1071–1112 (DVDECARDPLLCRGGTCTNTDGSYKCQCPPGHELTAKGTACE). Positions 1113 to 1154 (DIDECSLSDGLCPHGQCVNVIGAFQCSCHAGFQSTPDRQGCV) constitute an EGF-like 15; calcium-binding domain. Positions 1155 to 1195 (DINECRVQNGGCDVHCINTEGSYRCSCGQGYSLMPDGRACA) constitute an EGF-like 16; calcium-binding domain. The EGF-like 17 domain maps to 1196–1237 (DVDECEENPRVCDQGHCTNMPGGHRCLCYDGFMATPDMRTCV). The EGF-like 18; calcium-binding domain occupies 1238 to 1279 (DVDECDLNPHICLHGDCENTKGSFVCHCQLGYMVRKGATGCS). In terms of domain architecture, EGF-like 19; calcium-binding spans 1280-1320 (DVDECEVGGHNCDSHASCLNIPGSFSCRCLPGWVGDGFECH). Residues 1321–1361 (DLDECVSQEHRCSPRGDCLNVPGSYRCTCRQGFAGDGFFCE) enclose the EGF-like 20; calcium-binding domain. The EGF-like 21; calcium-binding domain occupies 1362 to 1403 (DRDECAENVDLCDNGQCLNAPGGYRCECEMGFDPTEDHRACQ). Positions 1404–1444 (DVDECAQGNLCAFGSCENLPGMFRCICNGGYELDRGGGNCT) constitute an EGF-like 22; calcium-binding domain. N1442 is a glycosylation site (N-linked (GlcNAc...) asparagine). Residues 1445–1485 (DINECADPVNCINGVCINTPGSYLCSCPQDFELNPSGVGCV) enclose the EGF-like 23; calcium-binding domain. Residues 1490–1546 (GNCFLETHDRGDSGISCSAEIGVGVTRASCCCSLGRAWGNPCELCPMANTTEYRTLC) form the TB 6 domain. N1538 carries N-linked (GlcNAc...) asparagine glycosylation. The EGF-like 24; calcium-binding domain occupies 1563–1604 (DIDECQELPGLCQGGDCVNTFGSFQCECPPGYHLSEHTRICE). 6 disulfide bridges follow: C1567-C1579, C1574-C1588, C1590-C1603, C1609-C1621, C1616-C1630, and C1632-C1645. Residues 1605-1646 (DIDECSTHSGICGPGTCYNTLGNYTCVCPAEYLQVNGGNNCM) enclose the EGF-like 25; calcium-binding domain. N1627 carries an N-linked (GlcNAc...) asparagine glycan. One can recognise a TB 7 domain in the interval 1651 to 1703 (SVCFRHYNGTCQNELAFNVTRKMCCCSYNIGQAWNRPCEACPTPISPDYQILC). N-linked (GlcNAc...) asparagine glycans are attached at residues N1658 and N1668. The EGF-like 26; calcium-binding domain occupies 1721 to 1762 (DIDECGEIPAICANGICINQIGSFRCECPAGFNYNSILLACE). Intrachain disulfides connect C1725/C1737, C1732/C1746, C1748/C1761, C1767/C1780, C1774/C1789, C1791/C1803, C1809/C1821, C1816/C1830, C1832/C1845, C1851/C1861, C1856/C1870, C1872/C1884, C1890/C1903, C1898/C1912, C1914/C1927, C1933/C1945, C1940/C1954, C1956/C1967, C1973/C1985, C1980/C1994, and C1996/C2009. The 42-residue stretch at 1763–1804 (DVDECGSRESPCQQNADCINIPGSYRCKCTRGYKLSPGGACV) folds into the EGF-like 27; calcium-binding domain. Residues 1805–1846 (GRNECREIPNVCSHGDCMDTEGSYMCLCHRGFQASADQTLCM) form the EGF-like 28 domain. An EGF-like 29; calcium-binding domain is found at 1847–1885 (DIDECDRQPCGNGTCKNIIGSYNCLCFPGFVVTHNGDCV). N1858 carries an N-linked (GlcNAc...) asparagine glycan. Residues 1886–1928 (DFDECTTLVGQVCRFGHCLNTAGSFHCLCQDGFELTADGKNCV) form the EGF-like 30; calcium-binding domain. An EGF-like 31; calcium-binding domain is found at 1929–1968 (DTNECLSLAGTCLPGTCQNLEGSFRCICPPGFQVQSDHCI). Residues 1969 to 2010 (DIDECSEEPNLCLFGTCTNSPGSFQCLCPPGFVLSDNGHRCF) enclose the EGF-like 32; calcium-binding domain. Residues 2015 to 2068 (SFCFTRFEAGKCSVPKAFNTTKTRCCCSKRPGEGWGDPCELCPQEGSAAFQELC) enclose the TB 8 domain. Residue N2033 is glycosylated (N-linked (GlcNAc...) asparagine). Residues 2084–2125 (DVNECAENPGVCTNGVCVNTDGSFRCECPFGYSLDFTGINCV) enclose the EGF-like 33; calcium-binding domain. Disulfide bonds link C2088/C2100, C2095/C2109, C2111/C2124, C2130/C2141, C2136/C2150, C2152/C2164, C2170/C2181, C2177/C2190, C2192/C2205, C2211/C2225, C2218/C2234, C2236/C2250, C2256/C2268, C2263/C2277, and C2279/C2292. One can recognise an EGF-like 34; calcium-binding domain in the interval 2126–2165 (DTDECSVGHPCGQGTCTNVIGGFECACADGFEPGLMMTCE). The EGF-like 35; calcium-binding domain occupies 2166-2206 (DIDECSLNPLLCAFRCHNTEGSYLCTCPAGYTLREDGAMCR). The EGF-like 36; calcium-binding domain maps to 2207–2251 (DVDECADGQQDCHARGMECKNLIGTFACVCPPGMRPLPGSGEGCT). The 42-residue stretch at 2252-2293 (DDNECHAQPDLCVNGRCVNTAGSFRCDCDEGFQPSPTLTECH) folds into the EGF-like 37; calcium-binding domain. Positions 2298–2351 (GPCFAEVLQTMCRSLSSSSEAVTRAECCCGGGRGWGPRCELCPLPGTSAYRKLC) constitute a TB 9 domain. The 42-residue stretch at 2363–2404 (DVDECRMLAHLCAHGECINSLGSFRCHCQAGYTPDATATTCL) folds into the EGF-like 38; calcium-binding domain. 21 disulfide bridges follow: C2367-C2379, C2374-C2388, C2390-C2403, C2409-C2420, C2416-C2429, C2431-C2444, C2450-C2461, C2457-C2470, C2472-C2483, C2489-C2502, C2496-C2511, C2513-C2526, C2532-C2542, C2538-C2551, C2553-C2566, C2572-C2584, C2579-C2593, C2595-C2608, C2614-C2625, C2621-C2634, and C2636-C2648. Residues 2405–2445 (DMDECSQVPKPCTFLCKNTKGSFLCSCPRGYLLEEDGRTCK) enclose the EGF-like 39; calcium-binding domain. One can recognise an EGF-like 40; calcium-binding domain in the interval 2446 to 2484 (DLDECTSRQHNCQFLCVNTVGAFTCRCPPGFTQHHQACF). In terms of domain architecture, EGF-like 41; calcium-binding spans 2485 to 2527 (DNDECSAQPGPCGAHGHCHNTPGSFRCECHQGFTLVSSGHGCE). The region spanning 2528–2567 (DVNECDGPHRCQHGCQNQLGGYRCSCPQGFTQHSQWAQCV) is the EGF-like 42; calcium-binding domain. In terms of domain architecture, EGF-like 43; calcium-binding spans 2568–2609 (DENECALSPPTCGSASCRNTLGGFRCVCPSGFDFDQALGGCQ). The 40-residue stretch at 2610–2649 (EVDECAGRRGPCSYSCANTPGGFLCGCPQGYFRAGQGHCV) folds into the EGF-like 44; calcium-binding domain. N2713 carries N-linked (GlcNAc...) asparagine glycosylation.

It belongs to the fibrillin family. Post-translationally, probably forms intermolecular disulfide bonds either with other FBN3 molecules or with other components of the microfibrils. As to expression, predominantly expressed in connective tissues such as skeletal muscle, tendon, skin, perichondrium and periosteum. Highly expressed in fetal lung, brain, kidney. Expressed at low level in prostate, testis, mammary gland, uterus, ovary, placenta, bladder, adrenal gland, thyroid, fetal thymus, fetal liver, liver, fetal heart and heart.

It is found in the secreted. The protein localises to the extracellular space. Its subcellular location is the extracellular matrix. Its function is as follows. Fibrillins are structural components of 10-12 nm extracellular calcium-binding microfibrils, which occur either in association with elastin or in elastin-free bundles. Fibrillin-containing microfibrils provide long-term force bearing structural support. This Homo sapiens (Human) protein is Fibrillin-3 (FBN3).